Reading from the N-terminus, the 948-residue chain is Glycine dehydrogenase (decarboxylating) (948 aa).

An N6-(pyridoxal phosphate)lysine modification is found at K696.

It belongs to the GcvP family. In terms of assembly, the glycine cleavage system is composed of four proteins: P, T, L and H. It depends on pyridoxal 5'-phosphate as a cofactor.

It carries out the reaction N(6)-[(R)-lipoyl]-L-lysyl-[glycine-cleavage complex H protein] + glycine + H(+) = N(6)-[(R)-S(8)-aminomethyldihydrolipoyl]-L-lysyl-[glycine-cleavage complex H protein] + CO2. The glycine cleavage system catalyzes the degradation of glycine. The P protein binds the alpha-amino group of glycine through its pyridoxal phosphate cofactor; CO(2) is released and the remaining methylamine moiety is then transferred to the lipoamide cofactor of the H protein. This Akkermansia muciniphila (strain ATCC BAA-835 / DSM 22959 / JCM 33894 / BCRC 81048 / CCUG 64013 / CIP 107961 / Muc) protein is Glycine dehydrogenase (decarboxylating).